We begin with the raw amino-acid sequence, 445 residues long: Ribosomal protein uS12 methylthiotransferase RimO (445 aa).

Positions 13-123 constitute an MTTase N-terminal domain; the sequence is PRVGFVSLGC…VMAAIHHHLP (111 aa). C22, C58, C87, C154, C158, and C161 together coordinate [4Fe-4S] cluster. Residues 140–377 enclose the Radical SAM core domain; sequence LTPKHYAYLK…MQQQEIISKQ (238 aa). The region spanning 380–445 is the TRAM domain; the sequence is AVKKGQQLRV…DIHDLWTEKI (66 aa).

The protein belongs to the methylthiotransferase family. RimO subfamily. [4Fe-4S] cluster is required as a cofactor.

The protein localises to the cytoplasm. The enzyme catalyses L-aspartate(89)-[ribosomal protein uS12]-hydrogen + (sulfur carrier)-SH + AH2 + 2 S-adenosyl-L-methionine = 3-methylsulfanyl-L-aspartate(89)-[ribosomal protein uS12]-hydrogen + (sulfur carrier)-H + 5'-deoxyadenosine + L-methionine + A + S-adenosyl-L-homocysteine + 2 H(+). Functionally, catalyzes the methylthiolation of an aspartic acid residue of ribosomal protein uS12. The sequence is that of Ribosomal protein uS12 methylthiotransferase RimO from Nitrosomonas eutropha (strain DSM 101675 / C91 / Nm57).